The following is a 140-amino-acid chain: Small ribosomal subunit protein uS12 (140 aa).

Disordered regions lie at residues 1 to 20 (MPTI…VKSD) and 35 to 55 (QTNV…TMTP). At aspartate 102 the chain carries 3-methylthioaspartic acid. The interval 121-140 (DGRMQGRSKYGTKRPKAAKK) is disordered. The span at 130–140 (YGTKRPKAAKK) shows a compositional bias: basic residues.

Belongs to the universal ribosomal protein uS12 family. In terms of assembly, part of the 30S ribosomal subunit. Contacts proteins S8 and S17. May interact with IF1 in the 30S initiation complex.

In terms of biological role, with S4 and S5 plays an important role in translational accuracy. Its function is as follows. Interacts with and stabilizes bases of the 16S rRNA that are involved in tRNA selection in the A site and with the mRNA backbone. Located at the interface of the 30S and 50S subunits, it traverses the body of the 30S subunit contacting proteins on the other side and probably holding the rRNA structure together. The combined cluster of proteins S8, S12 and S17 appears to hold together the shoulder and platform of the 30S subunit. This Exiguobacterium sp. (strain ATCC BAA-1283 / AT1b) protein is Small ribosomal subunit protein uS12.